Consider the following 91-residue polypeptide: Protein LURE 1.6 (91 aa).

The first 20 residues, 1–20 (MKLPFIFLITLLIFVSSCTS), serve as a signal peptide directing secretion. 3 disulfide bridges follow: Cys-59–Cys-76, Cys-62–Cys-83, and Cys-66–Cys-85.

The protein belongs to the DEFL family. Expressed in the pistil. Detected in the synergid cells.

The protein localises to the secreted. Its function is as follows. Pollen tube attractants guiding pollen tubes to the ovular micropyle. The protein is Protein LURE 1.6 of Arabidopsis thaliana (Mouse-ear cress).